The sequence spans 485 residues: UDP-glycosyltransferase 91D1 (485 aa).

UDP-alpha-D-glucose contacts are provided by residues Ser-296, 355-356, 373-381, and 395-398; these read WA, HCGSGSIVE, and FCDQ.

The protein belongs to the UDP-glycosyltransferase family.

Its function is as follows. May glycosylate diterpenes or flavonols in leaves. The sequence is that of UDP-glycosyltransferase 91D1 from Stevia rebaudiana (Stevia).